The chain runs to 113 residues: Hydrogenase maturation factor HypA (113 aa).

Histidine 2 provides a ligand contact to Ni(2+). The Zn(2+) site is built by cysteine 73, cysteine 76, cysteine 89, and cysteine 92.

Belongs to the HypA/HybF family.

Functionally, involved in the maturation of [NiFe] hydrogenases. Required for nickel insertion into the metal center of the hydrogenase. The sequence is that of Hydrogenase maturation factor HypA from Alkalilimnicola ehrlichii (strain ATCC BAA-1101 / DSM 17681 / MLHE-1).